Here is a 150-residue protein sequence, read N- to C-terminus: MDPTELKRVFQMFDKNGDGTITGKELSETLRSLGIYIPDKELTQMIEKIDVNGDGCVDIDEFGELYKTIMDEEDEEEEDMKEAFNVFDQNGDGFITVDELKAVLSSLGLKQGKTLDDCKKMIKKVDVDGDGRVNYKEFRQMMKGGGFNSL.

EF-hand domains are found at residues 1–36 (MDPT…LGIY), 37–72 (IPDK…IMDE), 75–110 (EEEE…LGLK), and 113–148 (KTLD…GGFN). Aspartate 14, asparagine 16, aspartate 18, threonine 20, glutamate 25, aspartate 50, asparagine 52, aspartate 54, cysteine 56, glutamate 61, aspartate 88, asparagine 90, aspartate 92, glutamate 99, aspartate 126, aspartate 128, aspartate 130, arginine 132, and glutamate 137 together coordinate Ca(2+).

The protein belongs to the calmodulin family.

Potential calcium sensor. The protein is Calmodulin-like protein 7 (CML7) of Arabidopsis thaliana (Mouse-ear cress).